A 766-amino-acid polypeptide reads, in one-letter code: Darlin (766 aa).

4 ARM repeats span residues 82-119 (QLFE…NLTY), 167-208 (DFIQ…NLVD), 423-464 (EPNC…NLTL), and 465-537 (PTIN…ASMD). The tract at residues 561-585 (EEKEKTIEKTDEKTDEKTNEKKQSK) is disordered. One copy of the ARM 5 repeat lies at 610-649 (HQEKMKQLIEESVEPFFSLLQSPFPILQVEGAKGLVLLIK).

This sequence belongs to the RAP1GDS1 family. As to quaternary structure, binds to small GTPases racE, racC but not rab21. Binds preferentially to GDP-bound racE.

Functionally, part of a signaling pathway that initiates the aggregation and leads to the formation of aggregation centers or streams. Not essential for cytokinesis, pinocytosis or phagocytosis. Not essential for development, except in starvation-induced aggregation. The polypeptide is Darlin (darA) (Dictyostelium discoideum (Social amoeba)).